A 737-amino-acid chain; its full sequence is Dual specificity protein kinase KNS1 (737 aa).

Disordered stretches follow at residues Met-1–Lys-33 and Ser-270–Asn-290. The span at Ala-15 to Lys-33 shows a compositional bias: polar residues. A compositionally biased stretch (low complexity) spans Ser-277–Asn-290. Residues Phe-313 to Phe-720 form the Protein kinase domain. ATP is bound by residues Leu-319 to Val-327 and Lys-343. Asp-440 serves as the catalytic Proton acceptor. Thr-562 bears the Phosphothreonine mark.

It belongs to the protein kinase superfamily. CMGC Ser/Thr protein kinase family. Lammer subfamily. Post-translationally, phosphorylated (auto-) on Ser/Thr/Tyr.

It catalyses the reaction L-seryl-[protein] + ATP = O-phospho-L-seryl-[protein] + ADP + H(+). The catalysed reaction is L-threonyl-[protein] + ATP = O-phospho-L-threonyl-[protein] + ADP + H(+). The enzyme catalyses L-tyrosyl-[protein] + ATP = O-phospho-L-tyrosyl-[protein] + ADP + H(+). Its function is as follows. Nonessential protein kinase. This Saccharomyces cerevisiae (strain ATCC 204508 / S288c) (Baker's yeast) protein is Dual specificity protein kinase KNS1 (KNS1).